A 269-amino-acid chain; its full sequence is Ribosomal RNA large subunit methyltransferase E (269 aa).

S-adenosyl-L-methionine is bound by residues G58, W60, D78, D96, and D120. Catalysis depends on K160, which acts as the Proton acceptor. The segment at 234–269 (HEKKEGNETSDNDEDNNKNGLMIKKIKELRGKRSKL) is disordered. A compositionally biased stretch (basic and acidic residues) spans 258-269 (KIKELRGKRSKL).

The protein belongs to the class I-like SAM-binding methyltransferase superfamily. RNA methyltransferase RlmE family.

The protein localises to the cytoplasm. It catalyses the reaction uridine(2552) in 23S rRNA + S-adenosyl-L-methionine = 2'-O-methyluridine(2552) in 23S rRNA + S-adenosyl-L-homocysteine + H(+). Its function is as follows. Specifically methylates the uridine in position 2552 of 23S rRNA at the 2'-O position of the ribose in the fully assembled 50S ribosomal subunit. This Methanococcus aeolicus (strain ATCC BAA-1280 / DSM 17508 / OCM 812 / Nankai-3) protein is Ribosomal RNA large subunit methyltransferase E.